We begin with the raw amino-acid sequence, 1785 residues long: Brefeldin A-inhibited guanine nucleotide-exchange protein 2 (1785 aa).

The residue at position 1 (Met1) is an N-acetylmethionine. Residues 2 to 224 form a DCB; DCB:DCB domain and DCB:HUS domain interaction region; sequence QESQTKSMFV…KPQSPVIQAA (223 aa). Ser214, Ser218, and Ser227 each carry phosphoserine. The interval 232–285 is disordered; sequence RLKHSQAQSKPTTPEKTDLTNGEHARSDSGKVSTENGDAPRERGSSLSGTDDGA. Position 244 is a phosphothreonine (Thr244). Basic and acidic residues predominate over residues 244 to 260; that stretch reads TPEKTDLTNGEHARSDS. Phosphoserine occurs at positions 277, 348, and 349. An HUS; DCB:HUS domain interaction region spans residues 508–528; sequence ADAQCVVDIYVNYDCDLNAAN. Ser614 carries the post-translational modification Phosphoserine. A Phosphothreonine modification is found at Thr616. Ser617 carries the post-translational modification Phosphoserine. At Thr626 the chain carries Phosphothreonine. Positions 654–785 constitute an SEC7 domain; the sequence is FNKKPKRGIQ…IIMLTTDLHS (132 aa). Phosphoserine occurs at positions 700, 1511, 1513, 1514, 1525, 1528, 1534, and 1782. A compositionally biased stretch (polar residues) spans 1514-1532; it reads SIDKNPSERGQSQLSNPTD. The segment at 1514–1535 is disordered; the sequence is SIDKNPSERGQSQLSNPTDDSW.

In terms of assembly, homodimer. Interacts with ARFGEF1/BIG1; both proteins are probably part of the same or very similar macromolecular complexes. Interacts with PRKAR1A, PRKAR2A, PRKAR1B, PRKAR2B, PPP1CC, PDE3A, TNFRSF1A, MYCBP and EXOC7. Interacts with GABRB1, GABRB2 and GABRB3. In vitro phosphorylated by PKA reducing its GEF activity and dephosphorylated by phosphatase PP1. Expressed in placenta, lung, heart, brain, kidney and pancreas.

The protein resides in the cytoplasm. Its subcellular location is the membrane. It localises to the golgi apparatus. It is found in the perinuclear region. The protein localises to the trans-Golgi network. The protein resides in the endosome. Its subcellular location is the cytoskeleton. It localises to the microtubule organizing center. It is found in the centrosome. The protein localises to the cell projection. The protein resides in the dendrite. Its subcellular location is the cytoplasmic vesicle. It localises to the synapse. With respect to regulation, inhibited by brefeldin A. Functionally, promotes guanine-nucleotide exchange on ARF1 and ARF3 and to a lower extent on ARF5 and ARF6. Promotes the activation of ARF1/ARF5/ARF6 through replacement of GDP with GTP. Involved in the regulation of Golgi vesicular transport. Required for the integrity of the endosomal compartment. Involved in trafficking from the trans-Golgi network (TGN) to endosomes and is required for membrane association of the AP-1 complex and GGA1. Seems to be involved in recycling of the transferrin receptor from recycling endosomes to the plasma membrane. Probably is involved in the exit of GABA(A) receptors from the endoplasmic reticulum. Involved in constitutive release of tumor necrosis factor receptor 1 via exosome-like vesicles; the function seems to involve PKA and specifically PRKAR2B. Proposed to act as A kinase-anchoring protein (AKAP) and may mediate crosstalk between Arf and PKA pathways. This Homo sapiens (Human) protein is Brefeldin A-inhibited guanine nucleotide-exchange protein 2 (ARFGEF2).